The primary structure comprises 278 residues: Urease accessory protein UreD 3 (278 aa).

Belongs to the UreD family. In terms of assembly, ureD, UreF and UreG form a complex that acts as a GTP-hydrolysis-dependent molecular chaperone, activating the urease apoprotein by helping to assemble the nickel containing metallocenter of UreC. The UreE protein probably delivers the nickel.

It is found in the cytoplasm. Required for maturation of urease via the functional incorporation of the urease nickel metallocenter. In Bradyrhizobium sp. (strain BTAi1 / ATCC BAA-1182), this protein is Urease accessory protein UreD 3.